A 282-amino-acid chain; its full sequence is MGRVTERRKVIRIRDGAVSTRPDTLVAEEPLEIRLNGKPLAITMRTPGDDFALAAGFLVSEGVLAEQRDLQNIVYCAGATVDGSNTYNVVDVKTAPGVRIPDITLERNVYTTSSCGLCGKASLDAVRTTARWPIADTPPVRVTPELLADLPDRLRASQRVFDRTGGLHAAALFTEDGELVDVREDVGRHNAVDKLVGRALQNADLPLSRSVLLVSGRASFELAQKAVMAGIPVLAAVSAPSSLAVDLAAETGLTLVGFLRGSSMNVYAGADRVALRAAVGQG.

Residue Cys-115 is the Cysteine persulfide intermediate of the active site.

This sequence belongs to the FdhD family.

It localises to the cytoplasm. Functionally, required for formate dehydrogenase (FDH) activity. Acts as a sulfur carrier protein that transfers sulfur from IscS to the molybdenum cofactor prior to its insertion into FDH. This Streptomyces coelicolor (strain ATCC BAA-471 / A3(2) / M145) protein is Sulfur carrier protein FdhD.